Consider the following 2266-residue polypeptide: Protein ELYS (2266 aa).

The segment at 1–494 (MRDLRAQVTS…SGVVHLTCTG (494 aa)) is seven-bladed beta propeller repeats. A necessary for cytoplasmic localization region spans residues 1–981 (MRDLRAQVTS…QTLKINVMND (981 aa)). Phosphoserine occurs at positions 509, 528, 1080, 1138, 1142, 1150, 1153, 1155, and 1160. The interval 591–1092 (VVLTKEEFDR…IEEPSPIVYS (502 aa)) is important for nuclear localization. Residues 1019-2266 (YHLSTSSVFR…PKQILRRKML (1248 aa)) form a disordered region. Residues 1149 to 2266 (RSLPSSSQLK…PKQILRRKML (1118 aa)) are necessary for nuclear localization. Thr-1175 is subject to Phosphothreonine. Phosphoserine is present on residues Ser-1214, Ser-1218, Ser-1222, Ser-1232, and Ser-1250. Phosphothreonine is present on Thr-1257. A phosphoserine mark is found at Ser-1283 and Ser-1297. 2 stretches are compositionally biased toward polar residues: residues 1305–1320 (KGNSSVSITSDETTLE) and 1335–1353 (FTASKPKSSSTALTTNVTE). Thr-1369 is modified (phosphothreonine). Residues Ser-1371 and Ser-1513 each carry the phosphoserine modification. Residues 1446-1698 (RANDNKSMAD…MEQSIHETIP (253 aa)) are mediates transcriptional activity. Thr-1517 carries the post-translational modification Phosphothreonine. Phosphoserine is present on residues Ser-1533, Ser-1541, Ser-1729, and Ser-1806. 2 stretches are compositionally biased toward polar residues: residues 1796-1808 (LSQNQQIPQNSVT) and 1822-1838 (ILENTSSVEQELQITTG). Phosphothreonine is present on Thr-1808. The tract at residues 1842–2266 (KRLKSSQLLE…PKQILRRKML (425 aa)) is important for nuclear localization and chromatin binding. 3 positions are modified to phosphoserine: Ser-1878, Ser-1884, and Ser-1898. A compositionally biased stretch (polar residues) spans 1908-1919 (STNLDASENTGN). Basic and acidic residues-rich tracts occupy residues 1920–1930 (KQDDKSSDKQL) and 1940–1952 (GREVSPSDVREDS). Residues Ser-1944 and Ser-1946 each carry the phosphoserine modification. Residues 1971 to 1983 (PRKRGRPRKINPS) constitute a DNA-binding region (a.T hook). The segment covering 1986–2004 (VGSKAVKEERSPKKKEAPS) has biased composition (basic and acidic residues). 4 positions are modified to phosphoserine: Ser-1996, Ser-2043, Ser-2044, and Ser-2060. The span at 2064–2084 (VSEERTDEMTHKETNEQEERL) shows a compositional bias: basic and acidic residues. Residues Ser-2089, Ser-2120, Ser-2123, and Ser-2154 each carry the phosphoserine modification. Basic and acidic residues predominate over residues 2169–2179 (NKLEDELKDDA). Positions 2188–2197 (PKAKRIRTSK) are enriched in basic residues. Ser-2212, Ser-2222, and Ser-2226 each carry phosphoserine.

Belongs to the ELYS family. Associates with the Nup107-160 subcomplex of the NPC.

The protein localises to the cytoplasm. Its subcellular location is the nucleus. The protein resides in the nucleus envelope. It localises to the nucleus matrix. It is found in the chromosome. The protein localises to the centromere. Its subcellular location is the kinetochore. The protein resides in the nucleoplasm. It localises to the nuclear pore complex. Functionally, required for the assembly of a functional nuclear pore complex (NPC) on the surface of chromosomes as nuclei form at the end of mitosis. May initiate NPC assembly by binding to chromatin and recruiting the Nup107-160 subcomplex of the NPC. Also required for the localization of the Nup107-160 subcomplex of the NPC to the kinetochore during mitosis and for the completion of cytokinesis. The polypeptide is Protein ELYS (AHCTF1) (Homo sapiens (Human)).